The following is a 241-amino-acid chain: Pyridoxine/pyridoxamine 5'-phosphate oxidase (241 aa).

The tract at residues 1–35 is disordered; sequence MASNPPSAASPRRTAVSPGADRPDGPDPAGQRQSY. Substrate is bound by residues 32 to 35 and lysine 92; that span reads RQSY. FMN contacts are provided by residues 87–92, 102–103, arginine 108, lysine 109, and glutamine 131; these read RTVLLK and YT. The substrate site is built by tyrosine 149, arginine 153, and serine 157. FMN is bound by residues 166 to 167 and tryptophan 212; that span reads QS. 218–220 provides a ligand contact to substrate; that stretch reads RLH. Position 222 (arginine 222) interacts with FMN.

It belongs to the pyridoxamine 5'-phosphate oxidase family. As to quaternary structure, homodimer. Requires FMN as cofactor.

It catalyses the reaction pyridoxamine 5'-phosphate + O2 + H2O = pyridoxal 5'-phosphate + H2O2 + NH4(+). It carries out the reaction pyridoxine 5'-phosphate + O2 = pyridoxal 5'-phosphate + H2O2. Its pathway is cofactor metabolism; pyridoxal 5'-phosphate salvage; pyridoxal 5'-phosphate from pyridoxamine 5'-phosphate: step 1/1. It functions in the pathway cofactor metabolism; pyridoxal 5'-phosphate salvage; pyridoxal 5'-phosphate from pyridoxine 5'-phosphate: step 1/1. Catalyzes the oxidation of either pyridoxine 5'-phosphate (PNP) or pyridoxamine 5'-phosphate (PMP) into pyridoxal 5'-phosphate (PLP). The sequence is that of Pyridoxine/pyridoxamine 5'-phosphate oxidase from Frankia alni (strain DSM 45986 / CECT 9034 / ACN14a).